Consider the following 93-residue polypeptide: YcgL domain-containing protein Shal_1837 (93 aa).

Residues 1 to 85 (MICAVYKSRR…PVVNLLEQHK (85 aa)) enclose the YcgL domain.

This Shewanella halifaxensis (strain HAW-EB4) protein is YcgL domain-containing protein Shal_1837.